A 161-amino-acid polypeptide reads, in one-letter code: Phosphopantetheine adenylyltransferase (161 aa).

Residue S11 coordinates substrate. Residues S11 to F12 and H19 contribute to the ATP site. Substrate is bound by residues K43, L75, and R89. ATP contacts are provided by residues G90–R92, E100, and Y125–S131.

This sequence belongs to the bacterial CoaD family. Homohexamer. It depends on Mg(2+) as a cofactor.

The protein localises to the cytoplasm. The catalysed reaction is (R)-4'-phosphopantetheine + ATP + H(+) = 3'-dephospho-CoA + diphosphate. It functions in the pathway cofactor biosynthesis; coenzyme A biosynthesis; CoA from (R)-pantothenate: step 4/5. Its function is as follows. Reversibly transfers an adenylyl group from ATP to 4'-phosphopantetheine, yielding dephospho-CoA (dPCoA) and pyrophosphate. The protein is Phosphopantetheine adenylyltransferase of Staphylococcus epidermidis (strain ATCC 35984 / DSM 28319 / BCRC 17069 / CCUG 31568 / BM 3577 / RP62A).